Reading from the N-terminus, the 292-residue chain is 4-hydroxy-tetrahydrodipicolinate synthase (292 aa).

T45 contributes to the pyruvate binding site. Y133 (proton donor/acceptor) is an active-site residue. K161 acts as the Schiff-base intermediate with substrate in catalysis. A pyruvate-binding site is contributed by I203.

It belongs to the DapA family. Homotetramer; dimer of dimers.

It localises to the cytoplasm. It catalyses the reaction L-aspartate 4-semialdehyde + pyruvate = (2S,4S)-4-hydroxy-2,3,4,5-tetrahydrodipicolinate + H2O + H(+). It functions in the pathway amino-acid biosynthesis; L-lysine biosynthesis via DAP pathway; (S)-tetrahydrodipicolinate from L-aspartate: step 3/4. In terms of biological role, catalyzes the condensation of (S)-aspartate-beta-semialdehyde [(S)-ASA] and pyruvate to 4-hydroxy-tetrahydrodipicolinate (HTPA). The chain is 4-hydroxy-tetrahydrodipicolinate synthase from Salmonella paratyphi A (strain AKU_12601).